The primary structure comprises 877 residues: Alanine--tRNA ligase (877 aa).

4 residues coordinate Zn(2+): His-562, His-566, Cys-664, and His-668.

Belongs to the class-II aminoacyl-tRNA synthetase family. Requires Zn(2+) as cofactor.

Its subcellular location is the cytoplasm. It catalyses the reaction tRNA(Ala) + L-alanine + ATP = L-alanyl-tRNA(Ala) + AMP + diphosphate. In terms of biological role, catalyzes the attachment of alanine to tRNA(Ala) in a two-step reaction: alanine is first activated by ATP to form Ala-AMP and then transferred to the acceptor end of tRNA(Ala). Also edits incorrectly charged Ser-tRNA(Ala) and Gly-tRNA(Ala) via its editing domain. This Picosynechococcus sp. (strain ATCC 27264 / PCC 7002 / PR-6) (Agmenellum quadruplicatum) protein is Alanine--tRNA ligase.